The chain runs to 169 residues: Lipoprotein signal peptidase (169 aa).

Helical transmembrane passes span 4 to 24 (PICS…ILDI), 29 to 49 (WVMA…FNLT), 70 to 90 (WFFA…MYRS), and 101 to 121 (YALI…HGAV). Active-site residues include Asp-123 and Asp-141. The chain crosses the membrane as a helical span at residues 137-157 (FNLADVAISIGAVLVIFEGFL).

The protein belongs to the peptidase A8 family.

The protein resides in the cell inner membrane. The enzyme catalyses Release of signal peptides from bacterial membrane prolipoproteins. Hydrolyzes -Xaa-Yaa-Zaa-|-(S,diacylglyceryl)Cys-, in which Xaa is hydrophobic (preferably Leu), and Yaa (Ala or Ser) and Zaa (Gly or Ala) have small, neutral side chains.. It participates in protein modification; lipoprotein biosynthesis (signal peptide cleavage). Functionally, this protein specifically catalyzes the removal of signal peptides from prolipoproteins. In Yersinia pseudotuberculosis serotype O:1b (strain IP 31758), this protein is Lipoprotein signal peptidase.